The chain runs to 105 residues: Large ribosomal subunit protein uL24 (105 aa).

This sequence belongs to the universal ribosomal protein uL24 family. As to quaternary structure, part of the 50S ribosomal subunit.

One of two assembly initiator proteins, it binds directly to the 5'-end of the 23S rRNA, where it nucleates assembly of the 50S subunit. Functionally, one of the proteins that surrounds the polypeptide exit tunnel on the outside of the subunit. This is Large ribosomal subunit protein uL24 from Francisella tularensis subsp. novicida (strain U112).